An 82-amino-acid chain; its full sequence is MAVKIRLARCGRKKRPFYRMVVADERYARDGRFIEKVGTYNPLVNPAEVVVAKDRVEHWLGQGAQATRTVKSILKKEGVAVS.

This sequence belongs to the bacterial ribosomal protein bS16 family.

This Desulfosudis oleivorans (strain DSM 6200 / JCM 39069 / Hxd3) (Desulfococcus oleovorans) protein is Small ribosomal subunit protein bS16.